A 440-amino-acid polypeptide reads, in one-letter code: L-gulonolactone oxidase (440 aa).

The FAD-binding PCMH-type domain maps to 17–187 (YGCSPEMYYQ…LTVTLQCVPQ (171 aa)). A Pros-8alpha-FAD histidine modification is found at His-54. A helical membrane pass occupies residues 251-273 (IGFYLLEFLLWTSTYLPRLVGWI).

The protein belongs to the oxygen-dependent FAD-linked oxidoreductase family. FAD serves as cofactor. Highly expressed in liver.

The protein resides in the microsome membrane. The protein localises to the endoplasmic reticulum membrane. The enzyme catalyses L-gulono-1,4-lactone + O2 = L-ascorbate + H2O2 + H(+). Its pathway is cofactor biosynthesis; L-ascorbate biosynthesis via UDP-alpha-D-glucuronate pathway; L-ascorbate from UDP-alpha-D-glucuronate: step 4/4. Functionally, oxidizes L-gulono-1,4-lactone to hydrogen peroxide and L-xylo-hexulonolactone which spontaneously isomerizes to L-ascorbate. In Mus musculus (Mouse), this protein is L-gulonolactone oxidase (Gulo).